The primary structure comprises 233 residues: Ion-translocating oxidoreductase complex subunit E (233 aa).

The next 5 helical transmembrane spans lie at 22–42, 69–89, 93–113, 128–148, and 182–202; these read LLGL…LGLG, IPIY…LINA, GLYQ…IVVG, ALDG…LGSI, and PMLL…LLAA.

The protein belongs to the NqrDE/RnfAE family. As to quaternary structure, the complex is composed of six subunits: RnfA, RnfB, RnfC, RnfD, RnfE and RnfG.

Its subcellular location is the cell inner membrane. In terms of biological role, part of a membrane-bound complex that couples electron transfer with translocation of ions across the membrane. The chain is Ion-translocating oxidoreductase complex subunit E from Erwinia tasmaniensis (strain DSM 17950 / CFBP 7177 / CIP 109463 / NCPPB 4357 / Et1/99).